We begin with the raw amino-acid sequence, 1446 residues long: DNA-directed RNA polymerase subunit beta'' (1446 aa).

Zn(2+)-binding residues include Cys-217, Cys-285, Cys-292, and Cys-295.

The protein belongs to the RNA polymerase beta' chain family. RpoC2 subfamily. In plastids the minimal PEP RNA polymerase catalytic core is composed of four subunits: alpha, beta, beta', and beta''. When a (nuclear-encoded) sigma factor is associated with the core the holoenzyme is formed, which can initiate transcription. Zn(2+) is required as a cofactor.

It is found in the plastid. Its subcellular location is the chloroplast. It carries out the reaction RNA(n) + a ribonucleoside 5'-triphosphate = RNA(n+1) + diphosphate. Its function is as follows. DNA-dependent RNA polymerase catalyzes the transcription of DNA into RNA using the four ribonucleoside triphosphates as substrates. This Thalassiosira pseudonana (Marine diatom) protein is DNA-directed RNA polymerase subunit beta''.